A 513-amino-acid chain; its full sequence is Maturase K (513 aa).

This sequence belongs to the intron maturase 2 family. MatK subfamily.

The protein resides in the plastid. The protein localises to the chloroplast. Functionally, usually encoded in the trnK tRNA gene intron. Probably assists in splicing its own and other chloroplast group II introns. The sequence is that of Maturase K from Eleusine indica (Goosegrass).